A 233-amino-acid chain; its full sequence is DNA repair protein RecO (233 aa).

It belongs to the RecO family.

Its function is as follows. Involved in DNA repair and RecF pathway recombination. The chain is DNA repair protein RecO from Pseudomonas paraeruginosa (strain DSM 24068 / PA7) (Pseudomonas aeruginosa (strain PA7)).